Consider the following 575-residue polypeptide: E3 ubiquitin-protein ligase IpaH1.4 (575 aa).

Residues 1 to 270 (MIKSTNIQAI…PDYSGPQIFF (270 aa)) are interaction with target proteins. LRR repeat units follow at residues 69–90 (LQNQEAELNLSELDLKTLPDLP), 91–115 (PQITTLEIRKNLLTHLPDLPPMLKV), 117–130 (HAQFNQLESLPALP), 131–150 (ETLEELNAGDNKIKELPFLP), 151–170 (ENLTHLRVHNNRLHILPLLP), 171–195 (PELKLLVVSGNRLDSIPPFPDKLEG), 197–209 (ALANNFIEQLPEL), and 210–233 (PFSMNRAVLMNNNLTTLPESVLRL). The segment at 271-281 (SMGNSATISAP) is linker. The segment at 282–575 (EHSLADAVTA…LSENGSNHIA (294 aa)) is E3 ubiquitin-protein ligase catalytic domain. Residues 284–575 (SLADAVTAWF…LSENGSNHIA (292 aa)) enclose the NEL domain. Residue Cys-368 is the Glycyl thioester intermediate of the active site.

It belongs to the LRR-containing bacterial E3 ligase family. Interacts with human RBCK1/HOIL-1 and RNF31/HOIP components of the LUBAC complex. In terms of processing, ubiquitinated in the presence of host E1 ubiquitin-activating enzyme, E2 ubiquitin-conjugating enzyme and ubiquitin.

It localises to the secreted. It is found in the host cytoplasm. The catalysed reaction is S-ubiquitinyl-[E2 ubiquitin-conjugating enzyme]-L-cysteine + [acceptor protein]-L-lysine = [E2 ubiquitin-conjugating enzyme]-L-cysteine + N(6)-ubiquitinyl-[acceptor protein]-L-lysine.. It participates in protein modification; protein ubiquitination. With respect to regulation, exists in an autoinhibited state in the absence of substrate protein, probably due to interactions of the leucine-rich repeat domain with the catalytic domain. Is activated upon binding to a substrate protein. Its function is as follows. E3 ubiquitin-protein ligase effector that inhibits host cell innate immunity during bacterial infection by catalyzing 'Lys-48'-linked polyubiquitination and subsequent degradation of host RNF31/HOIP and RBCK1/HOIL-1. Host RNF31/HOIP is the catalytic component of the LUBAC complex, which conjugates linear ('Met-1'-linked) polyubiquitin chains at the surface of bacteria invading the host cytosol to form the ubiquitin coat surrounding bacteria. The bacterial ubiquitin coat acts as an 'eat-me' signal for xenophagy and promotes NF-kappa-B activation. By promoting degradation of host RNF31/HOIP, IpaH1.4 prevents formation of the bacterial ubiquitin coat and activation of host cell innate immunity. In Shigella flexneri, this protein is E3 ubiquitin-protein ligase IpaH1.4.